A 561-amino-acid polypeptide reads, in one-letter code: Cloacin (561 aa).

Composition is skewed to gly residues over residues 1-21, 29-40, and 66-91; these read MSGG…GGQA, SGKGGPSSGGGT, and FGNG…GGGQ. Disordered regions lie at residues 1–93, 254–273, 304–326, 432–507, and 530–561; these read MSGG…GQSS, PKGI…TAGG, VKQR…PEEG, KAAL…KRAR, and RASD…KKYL. The tract at residues 1–180 is involved in the translocation of the protein across the cell membrane; sequence MSGGDGRGPG…DTVTETPAST (180 aa). The segment at 200 to 420 is responsible for the receptor binding activity; the sequence is DERQHIAVVA…NAKLKAAQAS (221 aa). Composition is skewed to basic and acidic residues over residues 306 to 326 and 440 to 494; these read QRQE…PEEG and ESRK…EGKP. Residues 421–561 are ribonuclease activity; it reads LNAMNDALSR…DPKRNIKKYL (141 aa). The interval 540-561 is binding of immunity protein; it reads FDPKTGKQVKGPDPKRNIKKYL.

It belongs to the cloacin colicin family.

Functionally, inactivates ribosomes by hydrolyzing 16S RNA in 30S ribosomes at a specific site. Colicins are polypeptide toxins produced by and active against E.coli and closely related bacteria. The sequence is that of Cloacin (ccl) from Escherichia coli.